The following is a 189-amino-acid chain: Putative OVARIAN TUMOR DOMAIN-containing deubiquitinating enzyme 8 (189 aa).

The OTU domain maps to M1–K103. D5 is a catalytic residue. C8 (nucleophile) is an active-site residue. Residue H96 is part of the active site. A disordered region spans residues K105–E189. The stretch at W120–R181 forms a coiled coil. Short sequence motifs (nuclear localization signal) lie at residues R125 to K132 and K163 to K170. Residues K126–E174 show a composition bias toward basic and acidic residues. The span at K175–E189 shows a compositional bias: basic residues.

This sequence belongs to the peptidase C85 family.

The protein resides in the nucleus. It carries out the reaction Thiol-dependent hydrolysis of ester, thioester, amide, peptide and isopeptide bonds formed by the C-terminal Gly of ubiquitin (a 76-residue protein attached to proteins as an intracellular targeting signal).. In terms of biological role, hydrolase that can remove conjugated ubiquitin from proteins in vitro and may therefore play an important regulatory role at the level of protein turnover by preventing degradation. This chain is Putative OVARIAN TUMOR DOMAIN-containing deubiquitinating enzyme 8, found in Arabidopsis thaliana (Mouse-ear cress).